The chain runs to 900 residues: Methionine--tRNA ligase, cytoplasmic (900 aa).

The region spanning 74–198 is the GST C-terminal domain; that stretch reads GWEQDDLTNQ…VLKQQGVLAL (125 aa). The 'HIGH' region motif lies at 273 to 283; the sequence is PYVNNVPHLGN. The short motif at 593–597 is the 'KMSKS' region element; that stretch reads KFSKS. Residue Lys-596 participates in ATP binding. Ser-825 is subject to Phosphoserine. Position 835 is a phosphothreonine (Thr-835). One can recognise a WHEP-TRS domain in the interval 841-897; it reads QIQALMDEVTKQGNIVRELKAQKADKNEVAAEVAKLLDLKKQLAVAEGKPPEAPKGK.

This sequence belongs to the class-I aminoacyl-tRNA synthetase family. Monomer. Part of a multisubunit complex that groups tRNA ligases for Arg (RARS1), Asp (DARS1), Gln (QARS1), Ile (IARS1), Leu (LARS1), Lys (KARS1), Met (MARS1) the bifunctional ligase for Glu and Pro (EPRS1) and the auxiliary subunits AIMP1/p43, AIMP2/p38 and EEF1E1/p18. Forms a linear complex that contains MARS1, EEF1E1, EPRS1 and AIMP2 that is at the core of the multisubunit complex.

It localises to the cytoplasm. Its subcellular location is the cytosol. It is found in the nucleus. The protein localises to the nucleolus. It carries out the reaction tRNA(Met) + L-methionine + ATP = L-methionyl-tRNA(Met) + AMP + diphosphate. With respect to regulation, enzyme activity is increased by spermidine, EEF1A1, and when the Mg(2+) concentration is increased from 5 mM to 13 mM (in vitro), possibly by promoting the dissociation of the complex between the enzyme and its product. Functionally, catalyzes the specific attachment of an amino acid to its cognate tRNA in a 2 step reaction: the amino acid (AA) is first activated by ATP to form AA-AMP and then transferred to the acceptor end of the tRNA. Plays a role in the synthesis of ribosomal RNA in the nucleolus. The sequence is that of Methionine--tRNA ligase, cytoplasmic from Homo sapiens (Human).